Here is a 146-residue protein sequence, read N- to C-terminus: Probable calcium-binding protein CML40 (146 aa).

Residues 7 to 42 (NKRDEYQRVFSCFDKSHQGKVSVSTIERCVDAIKSG) form the EF-hand 1 domain. The interval 44 to 65 (RAVVDQEDTTNPNPEESTDDKS) is disordered. Positions 116 to 146 (KSLKDCEVMISQFDINRDGIINFDEFRAMMQ) constitute an EF-hand 2 domain. Positions 129, 131, 133, and 140 each coordinate Ca(2+).

Potential calcium sensor. This is Probable calcium-binding protein CML40 (CML40) from Arabidopsis thaliana (Mouse-ear cress).